The chain runs to 194 residues: CASP-like protein Ni6 (194 aa).

Residues 1 to 27 are Cytoplasmic-facing; sequence MSSMETEKGAVPTPQAPPVAPTDNKYR. A helical membrane pass occupies residues 28–48; sequence VVDVILRVLLLAASIASVVLM. The Extracellular portion of the chain corresponds to 49–75; the sequence is VTSKQTEIIVSPFGSRPNAAKFQNSPA. The helical transmembrane segment at 76–96 threads the bilayer; that stretch reads FIYLVAALSVAGLYSIITALV. The Cytoplasmic segment spans residues 97–109; the sequence is SLSYMRKPIVPPK. The chain crosses the membrane as a helical span at residues 110 to 130; it reads LFWILLIHDVLLLGIVAAATG. Topologically, residues 131 to 161 are extracellular; sequence TAGGVGYIGLKGNTHVRWGKIRNVYDKFCRH. Residues 162-182 traverse the membrane as a helical segment; it reads VGASIIVSLFAAAVLVLLVFV. Over 183–194 the chain is Cytoplasmic; sequence NANSLYRRIPKY.

Belongs to the Casparian strip membrane proteins (CASP) family. In terms of assembly, homodimer and heterodimers.

The protein resides in the cell membrane. The polypeptide is CASP-like protein Ni6 (Ni6) (Beta vulgaris subsp. maritima (Sea beet)).